We begin with the raw amino-acid sequence, 511 residues long: Protein phosphatase 2C 7 (511 aa).

Positions 1–19 are cleaved as a signal peptide; the sequence is MEEISPAVALTLGLANTMC. The PPM-type phosphatase domain occupies 188–501; it reads LWGTISICGG…DNISIIVIDL (314 aa). D242, G243, D432, and D492 together coordinate Mn(2+).

The protein belongs to the PP2C family. As to quaternary structure, interacts with PYL13. Mg(2+) is required as a cofactor. The cofactor is Mn(2+). Expressed in seeds.

It catalyses the reaction O-phospho-L-seryl-[protein] + H2O = L-seryl-[protein] + phosphate. It carries out the reaction O-phospho-L-threonyl-[protein] + H2O = L-threonyl-[protein] + phosphate. Key component and repressor of the abscisic acid (ABA) signaling pathway that regulates numerous ABA responses, such as stomatal closure, seed germination and inhibition of vegetative growth. The polypeptide is Protein phosphatase 2C 7 (HAB2) (Arabidopsis thaliana (Mouse-ear cress)).